A 1079-amino-acid polypeptide reads, in one-letter code: Electrogenic sodium bicarbonate cotransporter 1 (1079 aa).

The interval 1 to 62 (MEDEAALDRG…EKKEKERVSE (62 aa)) is required for interaction with AHCYL1. The Cytoplasmic portion of the chain corresponds to 1–466 (MEDEAALDRG…FASDFYDALN (466 aa)). Y30 bears the Phosphotyrosine mark. Residues 39-52 (YRRRRRHKRKAGHR) show a composition bias toward basic residues. Residues 39 to 78 (YRRRRRHKRKAGHREKKEKERVSENYSDKSDVENADESSS) are disordered. Residues 53 to 70 (EKKEKERVSENYSDKSDV) show a composition bias toward basic and acidic residues. Residues S61, S65, S68, S223, S232, S233, and S245 each carry the phosphoserine modification. Positions 238-265 (FTSPENGSPAMTHRNLTSSSLNDISDKP) are disordered. A phosphothreonine mark is found at T249 and T254. Over residues 251–260 (RNLTSSSLND) the composition is skewed to polar residues. A phosphoserine mark is found at S256, S257, and S262. Residues 467-491 (IQALSAILFIYLATVTNAITFGGLL) traverse the membrane as a helical segment. Residues 492 to 501 (GDATDNMQGV) lie on the Extracellular side of the membrane. The helical transmembrane segment at 502 to 520 (LESFLGTAVSGAVFCLFAG) threads the bilayer. A topological domain (cytoplasmic) is located at residue Q521. Residues 522 to 542 (PLTILSSTGPVLVFERLLFNF) traverse the membrane as a discontinuously helical segment. The Extracellular segment spans residues 543-550 (SKDHNFDY). Residues 551–571 (LEFRLWIGLWSAFLCLILVAT) traverse the membrane as a helical segment. Residues 572–585 (DASFLVQYFTRFTE) lie on the Cytoplasmic side of the membrane. A helical transmembrane segment spans residues 586 to 609 (EGFSSLISFIFIYDAFKKMIKLAD). At 610–692 (YYPINSNFKV…GNNCDFVPDI (83 aa)) the chain is on the extracellular side. Residues 693 to 710 (TLMSFILFLGTYTSSMAL) traverse the membrane as a helical segment. Topologically, residues 711–725 (KKFKTSRYFPTTARK) are cytoplasmic. The chain crosses the membrane as a helical span at residues 726–745 (LISDFAIILSILIFCVIDAL). The Extracellular segment spans residues 746–779 (VGVDTPKLIVPSEFKPTSPNRGWFVPPFGGNPWW). The interval 748–779 (VDTPKLIVPSEFKPTSPNRGWFVPPFGGNPWW) is interaction with CA4. The helical transmembrane segment at 780–807 (VYLAAAIPALLVTILIFMDQQITAVIVN) threads the bilayer. Topologically, residues 808 to 819 (RKEHKLKKGAGY) are cytoplasmic. Residues 820-836 (HLDLFWVAILMVVCSFM) form a helical membrane-spanning segment. A837 is a topological domain (extracellular). A discontinuously helical transmembrane segment spans residues 838–855 (LPWYVAATVISIAHIDSL). Residues 856 to 877 (KMETETSAPGEQPKFLGVREQR) lie on the Cytoplasmic side of the membrane. A helical transmembrane segment spans residues 878–894 (VTGTLVFILTGLSVFMA). Residues 895-901 (PILKFIP) lie on the Extracellular side of the membrane. A helical transmembrane segment spans residues 902-918 (MPVLYGVFLYMGVASLN). Topologically, residues 919-960 (GVQFMDRLKLLLMPLKHQPDFIYLRHVPLRRVHLFTFLQVLC) are cytoplasmic. The segment at residues 961–986 (LALLWILKSTVAAIIFPVMILALVAV) is an intramembrane region (discontinuously helical). Topologically, residues 987 to 1079 (RKGMDYLFSQ…PTFLERHTSC (93 aa)) are cytoplasmic. The interval 1002–1004 (LDD) is CA2-binding. Residues 1012 to 1079 (KKKEDEKKKK…PTFLERHTSC (68 aa)) are disordered. S1026 carries the phosphoserine; by PKA modification. S1029 is subject to Phosphoserine. The interval 1030-1033 (DSDD) is CA2-binding. Residues S1034 and S1044 each carry the phosphoserine modification. A required for basolateral targeting region spans residues 1057 to 1059 (FLS). Basic and acidic residues predominate over residues 1062 to 1079 (KPSDRERSPTFLERHTSC). S1069 carries the phosphoserine modification.

It belongs to the anion exchanger (TC 2.A.31) family. Homodimer. Interacts with CA2/carbonic anhydrase 2 and CA4/carbonic anhydrase 4 which may regulate transporter activity. Isoform 1 but not isoform 2 interacts with AHCYL1 (via PEST domain when phosphorylated); the interaction increases SLC4A4 isoform 1 activity. Interacts with AHCYL2. In terms of processing, phosphorylation of Ser-1026 by PKA increases the binding of CA2 and changes the Na(+):HCO3(-) stoichiometry of the transporter from 3:1 to 2:1. Phosphorylated in presence of STK39 and dephosphorylated in presence of PP1 phosphatase; phosphorylation seems to inhibit SLC4A4 activity. N-glycosylated. May not be necessary for the transporter basic functions. As to expression, expressed in vas deferens epithelia (at protein level).

It is found in the basolateral cell membrane. The protein localises to the cell membrane. The enzyme catalyses 2 hydrogencarbonate(out) + Na(+)(out) = 2 hydrogencarbonate(in) + Na(+)(in). The catalysed reaction is 3 hydrogencarbonate(out) + Na(+)(out) = 3 hydrogencarbonate(in) + Na(+)(in). Its function is as follows. Electrogenic sodium/bicarbonate cotransporter with a Na(+):HCO3(-) stoichiometry varying from 1:2 to 1:3. May regulate bicarbonate influx/efflux at the basolateral membrane of cells and regulate intracellular pH. This is Electrogenic sodium bicarbonate cotransporter 1 (SLC4A4) from Sus scrofa (Pig).